The primary structure comprises 237 residues: MEKREELYRGKAKSVYKTDDADRLILLFRNDTSAFDGKRIEQLDRKGMVNNKFNAFIMQKLEAAGVPTQFDKLLGDNECLVKKLDMIPVECVVRNYAAGSLVKRLGVEEGMKLNPYTFELFLKDDAKGDPFINESHVVAFGWGTAEQLARMKELSLKVNEVLSKLFDDAGLLLVDFKLEFGVFSDGSIVLGDEFSPDGCRLWDKDTKKKMDKDRFRQGLGDVIEAYEEVAQRLGVPL.

The protein belongs to the SAICAR synthetase family.

It catalyses the reaction 5-amino-1-(5-phospho-D-ribosyl)imidazole-4-carboxylate + L-aspartate + ATP = (2S)-2-[5-amino-1-(5-phospho-beta-D-ribosyl)imidazole-4-carboxamido]succinate + ADP + phosphate + 2 H(+). It participates in purine metabolism; IMP biosynthesis via de novo pathway; 5-amino-1-(5-phospho-D-ribosyl)imidazole-4-carboxamide from 5-amino-1-(5-phospho-D-ribosyl)imidazole-4-carboxylate: step 1/2. This Pseudomonas fluorescens (strain ATCC BAA-477 / NRRL B-23932 / Pf-5) protein is Phosphoribosylaminoimidazole-succinocarboxamide synthase.